We begin with the raw amino-acid sequence, 147 residues long: Hemoglobin subunit gamma (147 aa).

A Globin domain is found at 3 to 147 (HFTEEDKATI…VASALSSRYH (145 aa)). The heme b site is built by His64 and His93.

It belongs to the globin family. In terms of assembly, heterotetramer of two alpha chains and two gamma chains in fetal hemoglobin (Hb F). In terms of tissue distribution, red blood cells.

Gamma chains make up the fetal hemoglobin F, in combination with alpha chains. In Macaca fuscata fuscata (Japanese macaque), this protein is Hemoglobin subunit gamma (HBG).